Here is a 392-residue protein sequence, read N- to C-terminus: Putative 8-amino-7-oxononanoate synthase (392 aa).

R22 is a substrate binding site. Pyridoxal 5'-phosphate is bound at residue 109–110 (GW). H139 contacts substrate. Residues S187, 212–215 (DEAH), and 239–242 (TFSK) each bind pyridoxal 5'-phosphate. Residue K242 is modified to N6-(pyridoxal phosphate)lysine. T356 is a binding site for substrate.

This sequence belongs to the class-II pyridoxal-phosphate-dependent aminotransferase family. BioF subfamily. In terms of assembly, homodimer. It depends on pyridoxal 5'-phosphate as a cofactor.

It catalyses the reaction 6-carboxyhexanoyl-[ACP] + L-alanine + H(+) = (8S)-8-amino-7-oxononanoate + holo-[ACP] + CO2. Its pathway is cofactor biosynthesis; biotin biosynthesis. Its function is as follows. Catalyzes the decarboxylative condensation of pimeloyl-[acyl-carrier protein] and L-alanine to produce 8-amino-7-oxononanoate (AON), [acyl-carrier protein], and carbon dioxide. This is Putative 8-amino-7-oxononanoate synthase (bioF) from Paramagnetospirillum magneticum (strain ATCC 700264 / AMB-1) (Magnetospirillum magneticum).